Consider the following 172-residue polypeptide: Biogenesis of lysosome-related organelles complex 1 subunit 6 (172 aa).

Residues Met1–Asp10 show a composition bias toward pro residues. 2 disordered regions span residues Met1–Asp35 and Ala136–Thr172. Basic and acidic residues predominate over residues Arg143 to Leu164.

It belongs to the BLOC1S6 family. In terms of assembly, homodimer. Octamer composed of one copy each BLOC1S1, BLOC1S2, BLOC1S3, BLOC1S4, BLOC1S5, BLOC1S6, DTNBP1/BLOC1S7 and SNAPIN/BLOC1S8. The BLOC-1 complex associates with the AP-3 protein complex and membrane protein cargos. Interacts with BLOC1S4, BLOC1S5, DTNBP1/BLOC1S7, F-actin, SNAP25 isoform 1 and isoform 2, SNAP47 and STX12. Component of the biogenesis of lysosome-related organelles complex 1 (BLOC-1) composed of BLOC1S1, BLOC1S2, BLOC1S3, BLOC1S4, BLOC1S5, BLOC1S6, DTNBP1/BLOC1S7 and SNAPIN/BLOC1S8.

The protein resides in the cytoplasm. It is found in the membrane. Component of the BLOC-1 complex, a complex that is required for normal biogenesis of lysosome-related organelles (LRO), such as platelet dense granules and melanosomes. In concert with the AP-3 complex, the BLOC-1 complex is required to target membrane protein cargos into vesicles assembled at cell bodies for delivery into neurites and nerve terminals. The BLOC-1 complex, in association with SNARE proteins, is also proposed to be involved in neurite extension. May play a role in intracellular vesicle trafficking, particularly in the vesicle-docking and fusion process. The protein is Biogenesis of lysosome-related organelles complex 1 subunit 6 (Bloc1s6) of Rattus norvegicus (Rat).